The primary structure comprises 428 residues: Enolase (428 aa).

Gln-163 is a (2R)-2-phosphoglycerate binding site. Glu-205 acts as the Proton donor in catalysis. Mg(2+) contacts are provided by Asp-242, Glu-283, and Asp-310. (2R)-2-phosphoglycerate contacts are provided by Lys-335, Arg-364, Ser-365, and Lys-386. Lys-335 acts as the Proton acceptor in catalysis.

Belongs to the enolase family. Mg(2+) is required as a cofactor.

The protein localises to the cytoplasm. The protein resides in the secreted. It is found in the cell surface. It carries out the reaction (2R)-2-phosphoglycerate = phosphoenolpyruvate + H2O. The protein operates within carbohydrate degradation; glycolysis; pyruvate from D-glyceraldehyde 3-phosphate: step 4/5. Catalyzes the reversible conversion of 2-phosphoglycerate (2-PG) into phosphoenolpyruvate (PEP). It is essential for the degradation of carbohydrates via glycolysis. The polypeptide is Enolase (Streptomyces avermitilis (strain ATCC 31267 / DSM 46492 / JCM 5070 / NBRC 14893 / NCIMB 12804 / NRRL 8165 / MA-4680)).